Reading from the N-terminus, the 347-residue chain is MPHATQLYQHVPEKRWPIVYSPRYNITFMGLEKLHPFDAGKWGKVINFLKEEKLLSDGMLVEAREASEEDLLVVHTRRYLNELKWSFVVATITEIPPVIFLPNFLVQRKVLRPLRTQTGGTIMAGKLAVERGWAINVGGGFHHCSSDRGGGFCAYADITLAIKFLFERVEGISRATIIDLDAHQGNGHERDFMGDKRVYIMDVYNRHIYPGDRFAKEAIRRKVELEWGTEDEEYLEKVERNVRRSLQEHLPDVVVYNAGTDVLEGDRLGGLSISPAGIVKRDEVVFRVVRAHDIPILMVTSGGYQKRTARIIADSILNLHDLGLIGPEFPCVSAQNSGIPLLSCAVP.

A histone deacetylase region spans residues 14–318; sequence KRWPIVYSPR…ARIIADSILN (305 aa). Residue histidine 143 is part of the active site.

It belongs to the histone deacetylase family. As to quaternary structure, interacts with HDAC6.

It is found in the nucleus. The catalysed reaction is N(6)-acetyl-L-lysyl-[histone] + H2O = L-lysyl-[histone] + acetate. In terms of biological role, responsible for the deacetylation of lysine residues on the N-terminal part of the core histones (H2A, H2B, H3 and H4). Histone deacetylation gives a tag for epigenetic repression and plays an important role in transcriptional regulation, cell cycle progression and developmental events. Histone deacetylases act via the formation of large multiprotein complexes. In Mus musculus (Mouse), this protein is Histone deacetylase 11 (Hdac11).